A 387-amino-acid chain; its full sequence is F-box only protein 4 (387 aa).

Phosphoserine is present on residues Ser11, Ser12, and Ser48. In terms of domain architecture, F-box spans Ala56–Phe102.

Homodimer. Part of the SCF (SKP1-CUL1-F-box) E3 ubiquitin-protein ligase complex SCF(FBXO4) formed of CUL1, SKP1, RBX1 and FBXO4. Interacts with TERF1; this interaction is prevented in the presence of GNL3L. Identified in a complex with CRYAB and CCND1. Post-translationally, phosphorylation at Ser-11 varies during the cell cycle. It is low in resting cells and high in the S phase and the G2/M phase of the cell cycle. Phosphorylation is decreased during late G1 phase. Phosphorylation at Ser-11 promotes homodimerization and is necessary for optimal ubiquitin ligase activity towards CCND1.

It localises to the cytoplasm. Its pathway is protein modification; protein ubiquitination. Functionally, substrate recognition component of a SCF (SKP1-CUL1-F-box protein) E3 ubiquitin-protein ligase complex that mediates the ubiquitination and subsequent proteasomal degradation of target proteins. Promotes ubiquitination of cyclin-D1 (CCND1) and its subsequent proteasomal degradation. However, it does not act as a major regulator of CCND1 stability during the G1/S transition. Recognizes TERF1 and promotes its ubiquitination together with UBE2D1. Promotes ubiquitination of FXR1 following phosphorylation of FXR1 by GSK3B, leading to FXR1 degradation by the proteasome. In Bos taurus (Bovine), this protein is F-box only protein 4 (FBXO4).